Here is a 299-residue protein sequence, read N- to C-terminus: Protoheme IX farnesyltransferase (299 aa).

The next 8 membrane-spanning stretches (helical) occupy residues 25–45, 51–71, 97–117, 119–139, 147–167, 173–193, 225–245, and 275–295; these read IVSL…PDLA, LFGT…NHLI, ALAF…FLVN, LTAW…TAFL, IVLG…AVTG, AFLL…ALAL, FLLF…LLYL, and FGYS…DHYL.

It belongs to the UbiA prenyltransferase family. Protoheme IX farnesyltransferase subfamily.

It is found in the cell inner membrane. The enzyme catalyses heme b + (2E,6E)-farnesyl diphosphate + H2O = Fe(II)-heme o + diphosphate. It participates in porphyrin-containing compound metabolism; heme O biosynthesis; heme O from protoheme: step 1/1. Its function is as follows. Converts heme B (protoheme IX) to heme O by substitution of the vinyl group on carbon 2 of heme B porphyrin ring with a hydroxyethyl farnesyl side group. This is Protoheme IX farnesyltransferase from Nitrosococcus oceani (strain ATCC 19707 / BCRC 17464 / JCM 30415 / NCIMB 11848 / C-107).